Consider the following 599-residue polypeptide: 2-succinyl-5-enolpyruvyl-6-hydroxy-3-cyclohexene-1-carboxylate synthase (599 aa).

Positions 1 to 21 are enriched in low complexity; that stretch reads MTSENPLDPNNAYAAADDAPL. Positions 1–35 are disordered; sequence MTSENPLDPNNAYAAADDAPLSEGDPTGAPADSGS.

Belongs to the TPP enzyme family. MenD subfamily. Homodimer. Requires Mg(2+) as cofactor. Mn(2+) serves as cofactor. Thiamine diphosphate is required as a cofactor.

It carries out the reaction isochorismate + 2-oxoglutarate + H(+) = 5-enolpyruvoyl-6-hydroxy-2-succinyl-cyclohex-3-ene-1-carboxylate + CO2. It functions in the pathway quinol/quinone metabolism; 1,4-dihydroxy-2-naphthoate biosynthesis; 1,4-dihydroxy-2-naphthoate from chorismate: step 2/7. The protein operates within quinol/quinone metabolism; menaquinone biosynthesis. Functionally, catalyzes the thiamine diphosphate-dependent decarboxylation of 2-oxoglutarate and the subsequent addition of the resulting succinic semialdehyde-thiamine pyrophosphate anion to isochorismate to yield 2-succinyl-5-enolpyruvyl-6-hydroxy-3-cyclohexene-1-carboxylate (SEPHCHC). The protein is 2-succinyl-5-enolpyruvyl-6-hydroxy-3-cyclohexene-1-carboxylate synthase of Arthrobacter sp. (strain FB24).